The chain runs to 414 residues: Gamma-glutamyl phosphate reductase (414 aa).

Belongs to the gamma-glutamyl phosphate reductase family.

The protein resides in the cytoplasm. The enzyme catalyses L-glutamate 5-semialdehyde + phosphate + NADP(+) = L-glutamyl 5-phosphate + NADPH + H(+). The protein operates within amino-acid biosynthesis; L-proline biosynthesis; L-glutamate 5-semialdehyde from L-glutamate: step 2/2. Its function is as follows. Catalyzes the NADPH-dependent reduction of L-glutamate 5-phosphate into L-glutamate 5-semialdehyde and phosphate. The product spontaneously undergoes cyclization to form 1-pyrroline-5-carboxylate. The polypeptide is Gamma-glutamyl phosphate reductase (Xanthomonas oryzae pv. oryzae (strain KACC10331 / KXO85)).